Reading from the N-terminus, the 437-residue chain is Putative permease IIC component (437 aa).

The PTS EIIC type-2 domain occupies 2-437; it reads FDYILSLGGT…LFLRKRELSE (436 aa). 12 helical membrane-spanning segments follow: residues 5 to 25, 35 to 55, 88 to 108, 134 to 154, 173 to 193, 215 to 235, 236 to 256, 302 to 322, 325 to 345, 354 to 374, 385 to 405, and 410 to 430; these read ILSL…GLIF, AGVT…MAID, ATAI…AMLV, LMTG…ALSL, ISIP…LDAI, GMVG…GLAA, GEGF…MVLF, TIAV…ILPG, VLPL…TVIH, ISGV…APYF, FAGE…GWSI, and SLGI…VLFL.

The protein localises to the cell inner membrane. The phosphoenolpyruvate-dependent sugar phosphotransferase system (PTS), a major carbohydrate active -transport system, catalyzes the phosphorylation of incoming sugar substrates concomitant with their translocation across the cell membrane. The sequence is that of Putative permease IIC component (sgcC) from Escherichia coli (strain K12).